A 317-amino-acid chain; its full sequence is Sperm acrosome membrane-associated protein 6 (317 aa).

A signal peptide spans 1–18 (MFVFIAKLLIFSSVITSA). The Extracellular portion of the chain corresponds to 19–281 (FTCYQCFIDE…PSFSFWLPRP (263 aa)). 5 cysteine pairs are disulfide-bonded: cysteine 21/cysteine 143, cysteine 24/cysteine 146, cysteine 35/cysteine 51, cysteine 128/cysteine 151, and cysteine 132/cysteine 157. Asparagine 29 is a glycosylation site (N-linked (GlcNAc...) asparagine). One can recognise an Ig-like domain in the interval 123 to 237 (PRVSGCLPPC…EVLSQEQSLV (115 aa)). Asparagine 168 carries an N-linked (GlcNAc...) asparagine glycan. Cysteines 174 and 227 form a disulfide. A helical membrane pass occupies residues 282–302 (ALLITCLTATMLLIFLSLGAM). The Cytoplasmic segment spans residues 303-317 (CRLWYQIRTNVSNPA).

This sequence belongs to the SPACA6 family. Forms a complex with izumo1 and tmem81 on spermatocyte cell membrane. The complex binds to oocyte protein bncr. As to expression, expressed in testis.

It localises to the cytoplasmic vesicle. The protein localises to the secretory vesicle. The protein resides in the acrosome membrane. In terms of biological role, sperm protein required for fusion of sperm with the egg membrane during fertilization. May regulate the expression of sperm surface protein DCST2. The chain is Sperm acrosome membrane-associated protein 6 from Danio rerio (Zebrafish).